Here is a 203-residue protein sequence, read N- to C-terminus: Holliday junction branch migration complex subunit RuvA (203 aa).

A domain I region spans residues methionine 1–asparagine 64. The domain II stretch occupies residues asparagine 65–proline 142. Positions alanine 143–proline 154 are flexible linker. Residues threonine 155–leucine 203 form a domain III region.

It belongs to the RuvA family. As to quaternary structure, homotetramer. Forms an RuvA(8)-RuvB(12)-Holliday junction (HJ) complex. HJ DNA is sandwiched between 2 RuvA tetramers; dsDNA enters through RuvA and exits via RuvB. An RuvB hexamer assembles on each DNA strand where it exits the tetramer. Each RuvB hexamer is contacted by two RuvA subunits (via domain III) on 2 adjacent RuvB subunits; this complex drives branch migration. In the full resolvosome a probable DNA-RuvA(4)-RuvB(12)-RuvC(2) complex forms which resolves the HJ.

Its subcellular location is the cytoplasm. Its function is as follows. The RuvA-RuvB-RuvC complex processes Holliday junction (HJ) DNA during genetic recombination and DNA repair, while the RuvA-RuvB complex plays an important role in the rescue of blocked DNA replication forks via replication fork reversal (RFR). RuvA specifically binds to HJ cruciform DNA, conferring on it an open structure. The RuvB hexamer acts as an ATP-dependent pump, pulling dsDNA into and through the RuvAB complex. HJ branch migration allows RuvC to scan DNA until it finds its consensus sequence, where it cleaves and resolves the cruciform DNA. The polypeptide is Holliday junction branch migration complex subunit RuvA (Klebsiella pneumoniae (strain 342)).